We begin with the raw amino-acid sequence, 496 residues long: tRNA-2-methylthio-N(6)-dimethylallyladenosine synthase (496 aa).

The 117-residue stretch at 10–126 (RTYEVRTYGC…LPALLERARV (117 aa)) folds into the MTTase N-terminal domain. The [4Fe-4S] cluster site is built by Cys-19, Cys-55, Cys-89, Cys-163, Cys-167, and Cys-170. One can recognise a Radical SAM core domain in the interval 149–380 (RESAYAAWVS…ALVNEIAWEE (232 aa)). In terms of domain architecture, TRAM spans 382 to 451 (KRLVGRRVEL…PHHLVADGPV (70 aa)). The segment at 465–496 (ARNAAPAPSSGVTLGMPTVGAPAPLPDAPACR) is disordered. Residues 487 to 496 (APLPDAPACR) are compositionally biased toward pro residues.

It belongs to the methylthiotransferase family. MiaB subfamily. Monomer. Requires [4Fe-4S] cluster as cofactor.

It localises to the cytoplasm. The catalysed reaction is N(6)-dimethylallyladenosine(37) in tRNA + (sulfur carrier)-SH + AH2 + 2 S-adenosyl-L-methionine = 2-methylsulfanyl-N(6)-dimethylallyladenosine(37) in tRNA + (sulfur carrier)-H + 5'-deoxyadenosine + L-methionine + A + S-adenosyl-L-homocysteine + 2 H(+). Functionally, catalyzes the methylthiolation of N6-(dimethylallyl)adenosine (i(6)A), leading to the formation of 2-methylthio-N6-(dimethylallyl)adenosine (ms(2)i(6)A) at position 37 in tRNAs that read codons beginning with uridine. The polypeptide is tRNA-2-methylthio-N(6)-dimethylallyladenosine synthase (Nocardioides sp. (strain ATCC BAA-499 / JS614)).